The sequence spans 153 residues: Protein C (153 aa).

The tract at residues Ser-16–Arg-42 is disordered. The segment covering Glu-18–Leu-29 has biased composition (polar residues).

In Tupaia paramyxovirus (TPMV), this protein is Protein C (P/V/C).